A 740-amino-acid polypeptide reads, in one-letter code: Ethylene receptor 1 (740 aa).

3 helical membrane-spanning segments follow: residues 23-43, 53-73, and 92-112; these read ISDFFIALAYFSIPLELIYFV, WVLVQFGAFIVLCGATHLINL, and VLTAVVSCATALMLVHIIPDL. 2 residues coordinate Cu cation: Cys65 and His69. Positions 158–307 constitute a GAF domain; it reads DRHTILKTTL…VVADQVAVAL (150 aa). Residues 350-588 enclose the Histidine kinase domain; sequence VMNHEMRTPM…TFIVKLGIAE (239 aa). His353 bears the Phosphohistidine; by autocatalysis mark. The Response regulatory domain maps to 614–731; the sequence is KVLVMDDNGV…KMRSVLSELI (118 aa). The residue at position 662 (Asp662) is a 4-aspartylphosphate.

The protein belongs to the ethylene receptor family. In terms of assembly, homodimer; disulfide-linked. The cofactor is Cu cation. Post-translationally, activation probably requires a transfer of a phosphate group between a His in the transmitter domain and an Asp of the receiver domain.

The protein localises to the endoplasmic reticulum membrane. The catalysed reaction is ATP + protein L-histidine = ADP + protein N-phospho-L-histidine.. In terms of biological role, may act early in the ethylene signal transduction pathway, possibly as an ethylene receptor, or as a regulator of the pathway. This Cucumis sativus (Cucumber) protein is Ethylene receptor 1 (ETR1).